The sequence spans 352 residues: UDP-3-O-acylglucosamine N-acyltransferase (352 aa).

Residue His257 is the Proton acceptor of the active site.

The protein belongs to the transferase hexapeptide repeat family. LpxD subfamily. In terms of assembly, homotrimer.

The enzyme catalyses a UDP-3-O-[(3R)-3-hydroxyacyl]-alpha-D-glucosamine + a (3R)-hydroxyacyl-[ACP] = a UDP-2-N,3-O-bis[(3R)-3-hydroxyacyl]-alpha-D-glucosamine + holo-[ACP] + H(+). Its pathway is bacterial outer membrane biogenesis; LPS lipid A biosynthesis. Its function is as follows. Catalyzes the N-acylation of UDP-3-O-acylglucosamine using 3-hydroxyacyl-ACP as the acyl donor. Is involved in the biosynthesis of lipid A, a phosphorylated glycolipid that anchors the lipopolysaccharide to the outer membrane of the cell. The chain is UDP-3-O-acylglucosamine N-acyltransferase from Methylobacterium nodulans (strain LMG 21967 / CNCM I-2342 / ORS 2060).